The sequence spans 72 residues: Large ribosomal subunit protein bL31 (72 aa).

The Zn(2+) site is built by cysteine 16, cysteine 18, cysteine 37, and cysteine 40.

The protein belongs to the bacterial ribosomal protein bL31 family. Type A subfamily. Part of the 50S ribosomal subunit. It depends on Zn(2+) as a cofactor.

Functionally, binds the 23S rRNA. The protein is Large ribosomal subunit protein bL31 of Buchnera aphidicola subsp. Acyrthosiphon pisum (strain Tuc7).